Consider the following 71-residue polypeptide: Translation initiation factor IF-1 (71 aa).

The S1-like domain occupies 1–71; it reads MAKQAAIEQD…LTKARITYRY (71 aa).

It belongs to the IF-1 family. In terms of assembly, component of the 30S ribosomal translation pre-initiation complex which assembles on the 30S ribosome in the order IF-2 and IF-3, IF-1 and N-formylmethionyl-tRNA(fMet); mRNA recruitment can occur at any time during PIC assembly.

Its subcellular location is the cytoplasm. In terms of biological role, one of the essential components for the initiation of protein synthesis. Stabilizes the binding of IF-2 and IF-3 on the 30S subunit to which N-formylmethionyl-tRNA(fMet) subsequently binds. Helps modulate mRNA selection, yielding the 30S pre-initiation complex (PIC). Upon addition of the 50S ribosomal subunit IF-1, IF-2 and IF-3 are released leaving the mature 70S translation initiation complex. The polypeptide is Translation initiation factor IF-1 (Christiangramia forsetii (strain DSM 17595 / CGMCC 1.15422 / KT0803) (Gramella forsetii)).